The following is a 138-amino-acid chain: Large ribosomal subunit protein eL14A (138 aa).

At serine 2 the chain carries N-acetylserine.

The protein belongs to the eukaryotic ribosomal protein eL14 family. In terms of assembly, component of the large ribosomal subunit (LSU). Mature yeast ribosomes consist of a small (40S) and a large (60S) subunit. The 40S small subunit contains 1 molecule of ribosomal RNA (18S rRNA) and 33 different proteins (encoded by 57 genes). The large 60S subunit contains 3 rRNA molecules (25S, 5.8S and 5S rRNA) and 46 different proteins (encoded by 81 genes). In terms of processing, N-terminally acetylated by acetyltransferase NatA.

The protein localises to the cytoplasm. Functionally, component of the ribosome, a large ribonucleoprotein complex responsible for the synthesis of proteins in the cell. The small ribosomal subunit (SSU) binds messenger RNAs (mRNAs) and translates the encoded message by selecting cognate aminoacyl-transfer RNA (tRNA) molecules. The large subunit (LSU) contains the ribosomal catalytic site termed the peptidyl transferase center (PTC), which catalyzes the formation of peptide bonds, thereby polymerizing the amino acids delivered by tRNAs into a polypeptide chain. The nascent polypeptides leave the ribosome through a tunnel in the LSU and interact with protein factors that function in enzymatic processing, targeting, and the membrane insertion of nascent chains at the exit of the ribosomal tunnel. The sequence is that of Large ribosomal subunit protein eL14A from Saccharomyces cerevisiae (strain ATCC 204508 / S288c) (Baker's yeast).